Reading from the N-terminus, the 310-residue chain is Protease HtpX homolog (310 aa).

The next 2 helical transmembrane spans lie at Asn-16–Ile-36 and Ile-55–Ile-75. A Zn(2+)-binding site is contributed by His-166. The active site involves Glu-167. Residue His-170 coordinates Zn(2+). Helical transmembrane passes span Val-182–Gly-202 and Met-214–Leu-234. Glu-239 lines the Zn(2+) pocket.

Belongs to the peptidase M48B family. Requires Zn(2+) as cofactor.

The protein resides in the cell inner membrane. This chain is Protease HtpX homolog, found in Helicobacter pylori (strain Shi470).